The sequence spans 246 residues: Phosphate import ATP-binding protein PstB (246 aa).

Positions 3–241 (AKTTNLNLFY…PKQEKTKAYL (239 aa)) constitute an ABC transporter domain. ATP is bound at residue 35–42 (GASGCGKS).

The protein belongs to the ABC transporter superfamily. Phosphate importer (TC 3.A.1.7) family. The complex is composed of two ATP-binding proteins (PstB), two transmembrane proteins (PstC and PstA) and a solute-binding protein (PstS).

The protein localises to the cell inner membrane. It carries out the reaction phosphate(out) + ATP + H2O = ADP + 2 phosphate(in) + H(+). Part of the ABC transporter complex PstSACB involved in phosphate import. Responsible for energy coupling to the transport system. This chain is Phosphate import ATP-binding protein PstB, found in Campylobacter jejuni subsp. jejuni serotype O:2 (strain ATCC 700819 / NCTC 11168).